We begin with the raw amino-acid sequence, 605 residues long: SET domain-containing protein SNOG_11806 (605 aa).

Positions 68–132 (TLDLTGMKTP…SRKGTGGLRV (65 aa)) are disordered. Positions 75–89 (KTPQPSRSPTVTRNV) are enriched in polar residues. Residues 104-115 (ESADDDDDDLQD) are compositionally biased toward acidic residues. Residues 473–579 (PPVQIYRTAE…AGSEITVDYG (107 aa)) form the SET domain.

This sequence belongs to the class V-like SAM-binding methyltransferase superfamily.

The polypeptide is SET domain-containing protein SNOG_11806 (Phaeosphaeria nodorum (strain SN15 / ATCC MYA-4574 / FGSC 10173) (Glume blotch fungus)).